We begin with the raw amino-acid sequence, 322 residues long: MTVFEGNTVAAAIAAGLKQLHRTRDQVEVEVIAEAKKGFLGLGKHPAQVRLTVVPASAAPATTPTSATATAQQSVATESTTAPTMPRPTVQTPKSTPTRQAKTSQATTSAAKPATSKAKAVAKPASMAVTTGPVIADTDQSKPATTSKTKSVAADQSQTPRTPAEIAARQAANETAVRALCDYLLAVVKELGVTADLDVDFGNRYATLNFDTTKQGLLIGKHGRTINALQDLAQVYMNHHGASHVNVVLDVDDYRERRAATLKRLAESTAREVIATGKQVFLDPMPSFERKLIHAELANNHHVTTFSEGRDPHRAVVVAIRK.

Residues 3-52 (VFEGNTVAAAIAAGLKQLHRTRDQVEVEVIAEAKKGFLGLGKHPAQVRLT) form a jag_N domain region. The span at 58-82 (AAPATTPTSATATAQQSVATESTTA) shows a compositional bias: low complexity. Positions 58–162 (AAPATTPTSA…AADQSQTPRT (105 aa)) are disordered. T89 carries the post-translational modification Phosphothreonine. Polar residues predominate over residues 89 to 99 (TVQTPKSTPTR). Low complexity predominate over residues 100 to 129 (QAKTSQATTSAAKPATSKAKAVAKPASMAV). A compositionally biased stretch (polar residues) spans 141–161 (SKPATTSKTKSVAADQSQTPR). The 78-residue stretch at 174-251 (ETAVRALCDY…ASHVNVVLDV (78 aa)) folds into the KH domain. In terms of domain architecture, R3H spans 256–322 (ERRAATLKRL…HRAVVVAIRK (67 aa)).

As to quaternary structure, forms a complex with KhpA.

The protein localises to the cytoplasm. A probable RNA chaperone. Forms a complex with KhpA which binds to cellular RNA and controls its expression. Plays a role in peptidoglycan (PG) homeostasis and cell length regulation. Functionally, necessary for correct cell elongation. This chain is RNA-binding protein KhpB, found in Lactiplantibacillus plantarum (strain ATCC BAA-793 / NCIMB 8826 / WCFS1) (Lactobacillus plantarum).